The chain runs to 306 residues: Foldase protein PrsA (306 aa).

Positions 1–20 are cleaved as a signal peptide; sequence MRRKIALFLALIFVGVSLVS. Cys21 carries the N-palmitoyl cysteine lipid modification. Cys21 is lipidated: S-diacylglycerol cysteine. Residues 165 to 255 form the PpiC domain; the sequence is FEVMRARHIL…YGYHIIKSEG (91 aa).

It belongs to the PrsA family.

Its subcellular location is the cell membrane. The enzyme catalyses [protein]-peptidylproline (omega=180) = [protein]-peptidylproline (omega=0). Functionally, plays a major role in protein secretion by helping the post-translocational extracellular folding of several secreted proteins. This is Foldase protein PrsA from Caldanaerobacter subterraneus subsp. tengcongensis (strain DSM 15242 / JCM 11007 / NBRC 100824 / MB4) (Thermoanaerobacter tengcongensis).